A 103-amino-acid polypeptide reads, in one-letter code: MYAIVEIAGKQFKVTKDLYIYTPKMDQEAGSSVSFDKILLLQNDQDIQVGDPTVAGAKIEGKVIEHVKGDKIIVFKRKRRKGYKTKQGHRQGYTKVLIQNILR.

Belongs to the bacterial ribosomal protein bL21 family. As to quaternary structure, part of the 50S ribosomal subunit. Contacts protein L20.

Its function is as follows. This protein binds to 23S rRNA in the presence of protein L20. In Amoebophilus asiaticus (strain 5a2), this protein is Large ribosomal subunit protein bL21.